The following is a 299-amino-acid chain: Acetylglutamate kinase (299 aa).

Residues 70–71, R92, and N186 contribute to the substrate site; that span reads GG.

Belongs to the acetylglutamate kinase family. ArgB subfamily.

The protein localises to the cytoplasm. The enzyme catalyses N-acetyl-L-glutamate + ATP = N-acetyl-L-glutamyl 5-phosphate + ADP. Its pathway is amino-acid biosynthesis; L-arginine biosynthesis; N(2)-acetyl-L-ornithine from L-glutamate: step 2/4. Catalyzes the ATP-dependent phosphorylation of N-acetyl-L-glutamate. This is Acetylglutamate kinase from Thermoanaerobacter sp. (strain X514).